Reading from the N-terminus, the 82-residue chain is Small ribosomal subunit protein bS16 (82 aa).

The protein belongs to the bacterial ribosomal protein bS16 family.

This is Small ribosomal subunit protein bS16 from Bdellovibrio bacteriovorus (strain ATCC 15356 / DSM 50701 / NCIMB 9529 / HD100).